A 169-amino-acid chain; its full sequence is Allophycocyanin subunit beta-18 (169 aa).

Residue Asn72 is modified to N4-methylasparagine. Cys82 contacts (2R,3E)-phycocyanobilin.

Belongs to the phycobiliprotein family. As to quaternary structure, heterodimer of an alpha and a beta chain. Contains one covalently linked bilin chromophore.

The protein localises to the plastid. It localises to the chloroplast thylakoid membrane. Light-harvesting photosynthetic bile pigment-protein from the phycobiliprotein complex. Allophycocyanin has a maximum absorption at approximately 650 nanometers. This Pyropia yezoensis (Susabi-nori) protein is Allophycocyanin subunit beta-18 (apcF).